Reading from the N-terminus, the 286-residue chain is NAD kinase (286 aa).

Aspartate 74 functions as the Proton acceptor in the catalytic mechanism. NAD(+)-binding positions include 74–75 (DG), 148–149 (ND), aspartate 178, alanine 186, 189–194 (TAYNLS), and glutamine 244.

It belongs to the NAD kinase family. It depends on a divalent metal cation as a cofactor.

The protein localises to the cytoplasm. The catalysed reaction is NAD(+) + ATP = ADP + NADP(+) + H(+). Involved in the regulation of the intracellular balance of NAD and NADP, and is a key enzyme in the biosynthesis of NADP. Catalyzes specifically the phosphorylation on 2'-hydroxyl of the adenosine moiety of NAD to yield NADP. The sequence is that of NAD kinase from Campylobacter jejuni subsp. jejuni serotype O:6 (strain 81116 / NCTC 11828).